The chain runs to 445 residues: Solute carrier family 52, riboflavin transporter, member 2 (445 aa).

6 helical membrane-spanning segments follow: residues 14–34 (LLVA…WVEL), 47–67 (LPSY…VVTL), 86–106 (VLGM…APVA), 112–132 (VAFL…NVTF), 147–167 (FFLG…VQGV), and 196–216 (FFWA…GLLL). The tract at residues 228–264 (ELGSGLQVGAPGAEEEVEESSPLQEPPSQAAGTTPGP) is disordered. Over residues 247–258 (SSPLQEPPSQAA) the composition is skewed to low complexity. 5 helical membrane passes run 277–297 (ACLL…LPAV), 312–332 (LAVV…MGVL), 339–359 (LGGL…LAVL), 366–386 (VGTS…LGVF), and 404–424 (ALLA…VAMF).

It belongs to the riboflavin transporter family. Highly expressed in brain, fetal brain and salivary gland. Weakly expressed in other tissues.

It localises to the cell membrane. The catalysed reaction is riboflavin(in) = riboflavin(out). Its activity is regulated as follows. Riboflavin transport is Na(+)-independent but moderately pH-sensitive. Activity is strongly inhibited by riboflavin analogs, such as lumiflavin. Weakly inhibited by flavin adenine dinucleotide (FAD) and flavin mononucleotide (FMN). In terms of biological role, plasma membrane transporter mediating the uptake by cells of the water soluble vitamin B2/riboflavin that plays a key role in biochemical oxidation-reduction reactions of the carbohydrate, lipid, and amino acid metabolism. Humans are unable to synthesize vitamin B2/riboflavin and must obtain it via intestinal absorption. May also act as a receptor for 4-hydroxybutyrate. Its function is as follows. (Microbial infection) In case of infection by retroviruses, acts as a cell receptor to retroviral envelopes similar to the porcine endogenous retrovirus (PERV-A). In Homo sapiens (Human), this protein is Solute carrier family 52, riboflavin transporter, member 2 (SLC52A2).